Reading from the N-terminus, the 294-residue chain is UDP-N-acetylenolpyruvoylglucosamine reductase (294 aa).

The FAD-binding PCMH-type domain maps to 26 to 189 (VGGQADVLFK…IEAEFKGVSS (164 aa)). R169 is a catalytic residue. C218 functions as the Proton donor in the catalytic mechanism. E288 is a catalytic residue.

It belongs to the MurB family. The cofactor is FAD.

Its subcellular location is the cytoplasm. The catalysed reaction is UDP-N-acetyl-alpha-D-muramate + NADP(+) = UDP-N-acetyl-3-O-(1-carboxyvinyl)-alpha-D-glucosamine + NADPH + H(+). It participates in cell wall biogenesis; peptidoglycan biosynthesis. Cell wall formation. In Wolbachia pipientis subsp. Culex pipiens (strain wPip), this protein is UDP-N-acetylenolpyruvoylglucosamine reductase.